We begin with the raw amino-acid sequence, 61 residues long: Large ribosomal subunit protein bL32 (61 aa).

Positions 1–16 (MAVPKRKTSPSKRGMR) are enriched in basic residues. Residues 1–39 (MAVPKRKTSPSKRGMRRSADALKAPTYIEDKNSGELRRP) are disordered. Residues 28–39 (IEDKNSGELRRP) are compositionally biased toward basic and acidic residues.

This sequence belongs to the bacterial ribosomal protein bL32 family.

The chain is Large ribosomal subunit protein bL32 from Rhizobium meliloti (strain 1021) (Ensifer meliloti).